Here is a 180-residue protein sequence, read N- to C-terminus: Nucleoside triphosphate/diphosphate phosphatase (180 aa).

The active-site Proton donor is Arg26. Mg(2+) is bound by residues Asn90, Asp106, Asp108, Asp110, Asp123, and Glu126.

The protein belongs to the Ntdp family. Mg(2+) is required as a cofactor.

It carries out the reaction a ribonucleoside 5'-triphosphate + H2O = a ribonucleoside 5'-diphosphate + phosphate + H(+). The enzyme catalyses a ribonucleoside 5'-diphosphate + H2O = a ribonucleoside 5'-phosphate + phosphate + H(+). Functionally, has nucleoside phosphatase activity towards nucleoside triphosphates and nucleoside diphosphates. In Staphylococcus saprophyticus subsp. saprophyticus (strain ATCC 15305 / DSM 20229 / NCIMB 8711 / NCTC 7292 / S-41), this protein is Nucleoside triphosphate/diphosphate phosphatase.